A 324-amino-acid chain; its full sequence is Signal peptidase I (324 aa).

At 1 to 3 (MAN) the chain is on the periplasmic side. Residues 4–22 (MFALILVIATLVTGILWCV) form a helical membrane-spanning segment. Residues 23–58 (DKFVFAPKRRARQAAAQTASGDALDNATLNKVAPKP) are Cytoplasmic-facing. A helical membrane pass occupies residues 59 to 77 (GWLETGASVFPVLAIVLIV). The Periplasmic segment spans residues 78-324 (RSFLYEPFQI…VRLSRIGGIH (247 aa)). Active-site residues include Ser-91 and Lys-146.

Belongs to the peptidase S26 family.

Its subcellular location is the cell inner membrane. The enzyme catalyses Cleavage of hydrophobic, N-terminal signal or leader sequences from secreted and periplasmic proteins.. The sequence is that of Signal peptidase I (lepB) from Salmonella typhi.